Consider the following 24-residue polypeptide: Ascaphin-7 (24 aa).

As to expression, expressed by the skin glands.

The protein resides in the secreted. In terms of biological role, antimicrobial peptide that shows higher potency against Gram-negative bacteria than against Gram-positive bacteria. Has a very week hemolytic activity. The sequence is that of Ascaphin-7 from Ascaphus truei (Coastal tailed frog).